Reading from the N-terminus, the 383-residue chain is LIM/homeobox protein Lhx3 (383 aa).

2 LIM zinc-binding domains span residues 14-73 (PLCA…RFGT) and 73-136 (TKCA…AKQR). Threonine 48 carries the post-translational modification Phosphothreonine. Serine 56 bears the Phosphoserine mark. A DNA-binding region (homeobox) is located at residues 142–201 (AKRPRTTITAKQLETLKSAYNTSPKPARHVREQLSSETGLDMRVVQVWFQNRRAKEKRLK). Residues 197 to 383 (EKRLKKDAGR…WLDEVDHAQF (187 aa)) are disordered. Residue tyrosine 212 is modified to Phosphotyrosine. Position 223 is a phosphoserine (serine 223). Low complexity predominate over residues 307-334 (PAALQSLPGPQPLLSSLVYPEAGLGLVP). Residues 335-344 (AGPPGGPPPM) are compositionally biased toward pro residues.

As to quaternary structure, interacts with POU1F1. At neuronal promoters, interacts with LDB1, in motor neurons LDB1 is displaced by ISL1 and a ternary complex is formed in which ISL1 contacts both LHX3 and LDB1; allosteric structural changes in the DNA binding domain of LHX3, induced by the ISL1-LHX3 interaction, may explain differences in sequence specificity of the different complexes. Interacts with LDB2. May interact with CITED2/MRG1.

It is found in the nucleus. Its function is as follows. Transcription factor. Recognizes and binds to the consensus sequence motif 5'-AATTAATTA-3' in the regulatory elements of target genes, such as glycoprotein hormones alpha chain CGA and visual system homeobox CHX10, positively modulating transcription; transcription can be co-activated by LDB2. Synergistically enhances transcription from the prolactin promoter in cooperation with POU1F1/Pit-1. Required for the establishment of the specialized cells of the pituitary gland and the nervous system. Involved in the development of interneurons and motor neurons in cooperation with LDB1 and ISL1. The sequence is that of LIM/homeobox protein Lhx3 (LHX3) from Sus scrofa (Pig).